A 483-amino-acid chain; its full sequence is FK506-binding protein 4 (483 aa).

2 disordered regions span residues 41–171 and 208–371; these read TAEP…EEFV and TGNY…LKKP. Residues 68–93 are compositionally biased toward acidic residues; sequence EEDDDEYLDIDGEDSEDDEESDDEEV. Composition is skewed to basic and acidic residues over residues 108 to 121 and 130 to 150; these read REAAIKKLLEATKE and ADAKPNGKGKKDSKGKAKASE. Composition is skewed to acidic residues over residues 151 to 167, 216 to 233, and 241 to 256; these read SDDEKSDEDDEEGEPNF, GQDEEDDEDEEDYSDEEY, and LESDSDYESDELDEID. Basic and acidic residues-rich tracts occupy residues 298 to 309, 323 to 344, and 351 to 370; these read LVAKDKKQAEKQ, ENKDVKKEGKSDKKVQFAKDLE, and AKDKLEKKEEKKDDKADLKK. Residues 397-483 form the PPIase FKBP-type domain; it reads GDRVSLRYIG…VFDIKLLEIK (87 aa).

Belongs to the FKBP-type PPIase family. FKBP3/4 subfamily. In terms of assembly, binds to histones H3 and H4.

It is found in the nucleus. It carries out the reaction [protein]-peptidylproline (omega=180) = [protein]-peptidylproline (omega=0). In terms of biological role, PPIase that acts as a histone chaperone. Histone proline isomerase that increases the rate of cis-trans isomerization at prolines on the histone H3 N-terminal tail. Proline isomerization influences H3 methylation thereby regulating gene expression. The polypeptide is FK506-binding protein 4 (FPR4) (Chaetomium thermophilum (strain DSM 1495 / CBS 144.50 / IMI 039719) (Thermochaetoides thermophila)).